Consider the following 364-residue polypeptide: ERCC4 domain-containing protein EP364R (364 aa).

The ERCC4 domain occupies 3-102 (FLVADHREHH…QLYFFVEGPA (100 aa)). The span at 319-328 (ASRPATQPAA) shows a compositional bias: polar residues. Residues 319–352 (ASRPATQPAATQPLHEVSDDATSNASDTSSPIGH) form a disordered region. Residues 338-348 (DATSNASDTSS) show a composition bias toward low complexity.

Belongs to the asfivirus EP364R family.

Its function is as follows. Plays a role in the inhibition of type I interferon signaling pathway. Mechanistically, specifically interacts with 2',3'-cGAMP and cleaves it via its phosphodiesterase activity. In turn, prevents 2',3'-cGAMP interaction with host ER-resident STING1 leading to inhibition of downstream signaling pathway and type I interferon production. The polypeptide is ERCC4 domain-containing protein EP364R (African swine fever virus (strain Badajoz 1971 Vero-adapted) (Ba71V)).